Consider the following 334-residue polypeptide: MSLEAVTEPGKCSIDPNTKDLLASQHAGNNTPLQENSSAPRSECKAQDAMSKRQMKKFLKQKQWEDQRELRKQKRKEKRQKRKLERQAQAEHNIDANSRKRFRHEVQPSALRLIIDCSFDDLMALRDVKKLNKQIRRCYAENRRAVHPVQLYLTSHGGQLKSNMDEYDKGWINWKDIHIKPEHYKDLIKKEDLVYLTSDSPEVLSELDETKAYIIGGLVDHNHHKGITYKKALELGISHAQLPLGNFVKMNTRKVLAVNHVFEIILAFLEKKEWKEAFFSVLPQRKGAIPLTETGEQPECRASEQEDGEDSDSDSSIDESATIQPSVRCEEQNS.

2 disordered regions span residues 1–101 and 290–334; these read MSLE…SRKR and PLTE…EQNS. Over residues 26–40 the composition is skewed to polar residues; it reads HAGNNTPLQENSSAP. A coiled-coil region spans residues 62–94; the sequence is KQWEDQRELRKQKRKEKRQKRKLERQAQAEHNI. Basic residues predominate over residues 71–84; the sequence is RKQKRKEKRQKRKL. Basic and acidic residues predominate over residues 85-98; that stretch reads ERQAQAEHNIDANS. The SAM-dependent MTase TRM10-type domain maps to 98-289; that stretch reads SRKRFRHEVQ…SVLPQRKGAI (192 aa). The span at 305-317 shows a compositional bias: acidic residues; that stretch reads QEDGEDSDSDSSI.

It belongs to the class IV-like SAM-binding methyltransferase superfamily. TRM10 family.

It catalyses the reaction guanosine(9) in tRNA + S-adenosyl-L-methionine = N(1)-methylguanosine(9) in tRNA + S-adenosyl-L-homocysteine + H(+). In terms of biological role, S-adenosyl-L-methionine-dependent guanine N(1)-methyltransferase that catalyzes the formation of N(1)-methylguanine at position 9 (m1G9) in tRNAs. Probably not able to catalyze formation of N(1)-methyladenine at position 9 (m1A9) in tRNAs. This Xenopus tropicalis (Western clawed frog) protein is tRNA methyltransferase 10 homolog A (trmt10a).